Here is a 450-residue protein sequence, read N- to C-terminus: Sensor histidine kinase EnvZ (450 aa).

At M1–T15 the chain is on the cytoplasmic side. The chain crosses the membrane as a helical span at residues L16–L35. Residues N36–S158 lie on the Periplasmic side of the membrane. Residues P159–I179 traverse the membrane as a helical segment. The HAMP domain maps to R180–D232. Over R180–A450 the chain is Cytoplasmic. Positions M223 to R289 are cytoplasmic dimerization domain (CDD), when dimerized forms osmosensitive core. One can recognise a Histidine kinase domain in the interval G240 to V440. ATP-binding positions include H243, N347–Y351, D373, R392–G393, and T402–L406. Position 243 is a phosphohistidine; by autocatalysis (H243).

As to quaternary structure, homodimer. In terms of processing, autophosphorylated.

The protein localises to the cell inner membrane. It catalyses the reaction ATP + protein L-histidine = ADP + protein N-phospho-L-histidine.. In terms of biological role, member of the two-component regulatory system EnvZ/OmpR involved in regulating expression of the outer membrane porins OmpC and OmpF as well as other genes. Unlike E.coli or S.typhimurium both porins are expressed constitutively. Involved in regulation of the biosynthesis of Vi polysaccharide, a capsular antigen thought to be involved in the virulence of S.typhi. Vi antigen is synthesized at low NaCl concentrations (under 0.4 M). EnvZ functions as a membrane-associated protein kinase that phosphorylates OmpR in response to environmental signals. The chain is Sensor histidine kinase EnvZ (envZ) from Salmonella typhi.